The primary structure comprises 66 residues: Beta-toxin Cb3 (66 aa).

The LCN-type CS-alpha/beta domain maps to 1 to 66 (KEGYIVNYYD…VWPLPNKTCL (66 aa)). Disulfide bonds link cysteine 12-cysteine 65, cysteine 16-cysteine 41, cysteine 25-cysteine 46, and cysteine 29-cysteine 48.

It belongs to the long (4 C-C) scorpion toxin superfamily. Sodium channel inhibitor family. Beta subfamily. As to expression, expressed by the venom gland.

Its subcellular location is the secreted. Its function is as follows. Beta toxins bind voltage-independently at site-4 of sodium channels (Nav) and reduces peak current and shifts the voltage of activation toward more negative potentials thereby affecting sodium channel activation and promoting spontaneous and repetitive firing. Has an inhibitory effect on voltage-gated sodium channels hNav1.1/SCN1A, hNav1.2/SCN2A, hNav1.4/SCN4A and hNav1.6/SCN8A. Reduces the peak current of hNav1.5/SCN5A but does not shift its voltage of activation. Also affects the inactivation processes of hNav1.1/SCN1A, hNav1.4/SCN4A, hNav1.5/SCN5A and hNav1.6/SCN8A. This toxin is active against mammals and lethal to mice. The sequence is that of Beta-toxin Cb3 from Centruroides baergi (Scorpion).